A 100-amino-acid chain; its full sequence is Apolipoprotein C-II (100 aa).

Residues 1-22 (MGSRFLLALFLILLVLGCEVQA) form the signal peptide. The interval 66 to 74 (SVDEKLRDM) is lipid binding. Residues 78–100 (SSAAMTTYASIFTDQILTLLKGE) form a lipoprotein lipase cofactor region.

It belongs to the apolipoprotein C2 family. In terms of processing, proapolipoprotein C-II is synthesized as a sialic acid containing glycoprotein which is subsequently desialylated prior to its proteolytic processing. Post-translationally, proapolipoprotein C-II, the major form found in plasma undergoes proteolytic cleavage of its N-terminal hexapeptide to generate the mature form apolipoprotein C-II, which occurs as the minor form in plasma.

It localises to the secreted. Component of chylomicrons, very low-density lipoproteins (VLDL), low-density lipoproteins (LDL), and high-density lipoproteins (HDL) in plasma. Plays an important role in lipoprotein metabolism as an activator of lipoprotein lipase. The sequence is that of Apolipoprotein C-II (APOC2) from Microtus ochrogaster (Prairie vole).